The primary structure comprises 61 residues: Large ribosomal subunit protein bL32 (61 aa).

Over residues 1 to 16 (MAVPKRKTSPSKRGMR) the composition is skewed to basic residues. The tract at residues 1 to 39 (MAVPKRKTSPSKRGMRRSADALKAPTYIEDKNSGELRRP) is disordered. Positions 28 to 39 (IEDKNSGELRRP) are enriched in basic and acidic residues.

The protein belongs to the bacterial ribosomal protein bL32 family.

The protein is Large ribosomal subunit protein bL32 of Rhizobium meliloti (strain 1021) (Ensifer meliloti).